We begin with the raw amino-acid sequence, 62 residues long: uncharacterized protein (62 aa).

The protein localises to the plastid. It localises to the chloroplast. This is an uncharacterized protein from Porphyra purpurea (Red seaweed).